A 107-amino-acid chain; its full sequence is UPF0235 protein RPC_0058 (107 aa).

This sequence belongs to the UPF0235 family.

In Rhodopseudomonas palustris (strain BisB18), this protein is UPF0235 protein RPC_0058.